Here is a 301-residue protein sequence, read N- to C-terminus: Ribosomal RNA small subunit methyltransferase H (301 aa).

Residues 31–33 (GGY), Asp49, Phe76, Asp97, and Gln104 contribute to the S-adenosyl-L-methionine site.

This sequence belongs to the methyltransferase superfamily. RsmH family.

The protein localises to the cytoplasm. It carries out the reaction cytidine(1402) in 16S rRNA + S-adenosyl-L-methionine = N(4)-methylcytidine(1402) in 16S rRNA + S-adenosyl-L-homocysteine + H(+). Specifically methylates the N4 position of cytidine in position 1402 (C1402) of 16S rRNA. The polypeptide is Ribosomal RNA small subunit methyltransferase H (Ehrlichia ruminantium (strain Gardel)).